Consider the following 702-residue polypeptide: Capsid vertex component 1 (702 aa).

The interval 200–244 is disordered; the sequence is MGESGTPTPQASSVSGGAGPAVVGTPDPPISPEEQLTAPGGDTAT. The segment covering 210–224 has biased composition (low complexity); it reads ASSVSGGAGPAVVGT.

This sequence belongs to the herpesviridae CVC1 protein family. Interacts (via C-terminus) with capsid vertex component 2/CVC2.

The protein resides in the virion. It localises to the host nucleus. Its function is as follows. Capsid vertex-specific component that plays a role during viral DNA encapsidation, assuring correct genome cleavage and presumably stabilizing capsids that contain full-length viral genomes. This is Capsid vertex component 1 from Homo sapiens (Human).